Reading from the N-terminus, the 357-residue chain is Ribosomal RNA large subunit methyltransferase M (357 aa).

Residues S183, 216-219 (APGG), D235, D255, and D271 each bind S-adenosyl-L-methionine. K300 acts as the Proton acceptor in catalysis.

The protein belongs to the class I-like SAM-binding methyltransferase superfamily. RNA methyltransferase RlmE family. RlmM subfamily. In terms of assembly, monomer.

Its subcellular location is the cytoplasm. The catalysed reaction is cytidine(2498) in 23S rRNA + S-adenosyl-L-methionine = 2'-O-methylcytidine(2498) in 23S rRNA + S-adenosyl-L-homocysteine + H(+). Catalyzes the 2'-O-methylation at nucleotide C2498 in 23S rRNA. The sequence is that of Ribosomal RNA large subunit methyltransferase M from Pseudomonas syringae pv. syringae (strain B728a).